We begin with the raw amino-acid sequence, 171 residues long: Lipoprotein signal peptidase (171 aa).

3 helical membrane passes run 8-28 (SFLW…YIVV), 64-84 (WQQY…VYFL), and 99-119 (ALII…GFVV). Catalysis depends on residues D120 and D138. The helical transmembrane segment at 133–153 (VFNIADIAICIGAGLLVLDAF) threads the bilayer.

Belongs to the peptidase A8 family.

It localises to the cell inner membrane. The catalysed reaction is Release of signal peptides from bacterial membrane prolipoproteins. Hydrolyzes -Xaa-Yaa-Zaa-|-(S,diacylglyceryl)Cys-, in which Xaa is hydrophobic (preferably Leu), and Yaa (Ala or Ser) and Zaa (Gly or Ala) have small, neutral side chains.. It functions in the pathway protein modification; lipoprotein biosynthesis (signal peptide cleavage). This protein specifically catalyzes the removal of signal peptides from prolipoproteins. The chain is Lipoprotein signal peptidase from Haemophilus influenzae (strain ATCC 51907 / DSM 11121 / KW20 / Rd).